A 544-amino-acid chain; its full sequence is Probable protein kinase UbiB (544 aa).

Residues 123 to 504 (DFDENALASA…QRWQKKMFVL (382 aa)) form the Protein kinase domain. Residues 129 to 137 (LASASIAQV) and lysine 155 each bind ATP. The active-site Proton acceptor is aspartate 290. 2 consecutive transmembrane segments (helical) span residues 501–521 (MFVL…FAAL) and 523–543 (LAIS…GFLL).

Belongs to the ABC1 family. UbiB subfamily.

It localises to the cell inner membrane. It participates in cofactor biosynthesis; ubiquinone biosynthesis [regulation]. In terms of biological role, is probably a protein kinase regulator of UbiI activity which is involved in aerobic coenzyme Q (ubiquinone) biosynthesis. The sequence is that of Probable protein kinase UbiB from Histophilus somni (strain 129Pt) (Haemophilus somnus).